The primary structure comprises 366 residues: Chorismate synthase (366 aa).

NADP(+)-binding residues include Arg-48 and Arg-54. Residues Arg-125–Ser-127, Asn-238–Ala-239, Gly-278, Lys-293–Ser-297, and Arg-319 contribute to the FMN site.

This sequence belongs to the chorismate synthase family. In terms of assembly, homotetramer. The cofactor is FMNH2.

It catalyses the reaction 5-O-(1-carboxyvinyl)-3-phosphoshikimate = chorismate + phosphate. It participates in metabolic intermediate biosynthesis; chorismate biosynthesis; chorismate from D-erythrose 4-phosphate and phosphoenolpyruvate: step 7/7. Catalyzes the anti-1,4-elimination of the C-3 phosphate and the C-6 proR hydrogen from 5-enolpyruvylshikimate-3-phosphate (EPSP) to yield chorismate, which is the branch point compound that serves as the starting substrate for the three terminal pathways of aromatic amino acid biosynthesis. This reaction introduces a second double bond into the aromatic ring system. This is Chorismate synthase from Neisseria meningitidis serogroup A / serotype 4A (strain DSM 15465 / Z2491).